Reading from the N-terminus, the 205-residue chain is MRSRLLLPVPHLPTIRETSEELSHGAPGQEPPASPSLDDYVRCICQLAQPTSVLDKATAWSPPNRSCRPAWPREKRHQSESLEDSSPCFSSLQPTLPAPGTDNPLDWLFGKSQEQQTDRRDLPNRTGSSGHWGVHRQMGKDSGRPSEARVPEYSLGRKPGHRHQTSNLKSWTSRKPCQALASVSSSRPSSILGTLYLHLPVIHEL.

The tract at residues 56–173 (KATAWSPPNR…QTSNLKSWTS (118 aa)) is disordered. Basic and acidic residues-rich tracts occupy residues 71–80 (WPREKRHQSE) and 138–150 (MGKD…EARV).

It localises to the cytoplasm. Functionally, may play a role in autophagy. This Rattus norvegicus (Rat) protein is Protein DEPP (Depp).